A 557-amino-acid chain; its full sequence is Aerobic glycerol-3-phosphate dehydrogenase (557 aa).

Residue Asp-21 to Glu-49 coordinates FAD.

Belongs to the FAD-dependent glycerol-3-phosphate dehydrogenase family. The cofactor is FAD.

It is found in the cytoplasm. The enzyme catalyses a quinone + sn-glycerol 3-phosphate = dihydroxyacetone phosphate + a quinol. It participates in polyol metabolism; glycerol degradation via glycerol kinase pathway; glycerone phosphate from sn-glycerol 3-phosphate (aerobic route): step 1/1. The protein is Aerobic glycerol-3-phosphate dehydrogenase (glpD) of Staphylococcus aureus (strain USA300).